A 419-amino-acid chain; its full sequence is Tryptophan synthase beta chain (419 aa).

Lys98 bears the N6-(pyridoxal phosphate)lysine mark.

Belongs to the TrpB family. In terms of assembly, tetramer of two alpha and two beta chains. The cofactor is pyridoxal 5'-phosphate.

It carries out the reaction (1S,2R)-1-C-(indol-3-yl)glycerol 3-phosphate + L-serine = D-glyceraldehyde 3-phosphate + L-tryptophan + H2O. The protein operates within amino-acid biosynthesis; L-tryptophan biosynthesis; L-tryptophan from chorismate: step 5/5. In terms of biological role, the beta subunit is responsible for the synthesis of L-tryptophan from indole and L-serine. The sequence is that of Tryptophan synthase beta chain from Ruegeria sp. (strain TM1040) (Silicibacter sp.).